Reading from the N-terminus, the 484-residue chain is Glycogen synthase (484 aa).

K20 is an ADP-alpha-D-glucose binding site.

It belongs to the glycosyltransferase 1 family. Bacterial/plant glycogen synthase subfamily.

The catalysed reaction is [(1-&gt;4)-alpha-D-glucosyl](n) + ADP-alpha-D-glucose = [(1-&gt;4)-alpha-D-glucosyl](n+1) + ADP + H(+). Its pathway is glycan biosynthesis; glycogen biosynthesis. Synthesizes alpha-1,4-glucan chains using ADP-glucose. The polypeptide is Glycogen synthase (Vibrio atlanticus (strain LGP32) (Vibrio splendidus (strain Mel32))).